The primary structure comprises 483 residues: UDP-N-acetylmuramoyl-L-alanyl-D-glutamate--2,6-diaminopimelate ligase (483 aa).

Serine 30 contacts UDP-N-acetyl-alpha-D-muramoyl-L-alanyl-D-glutamate. 109–115 (GTNGKTT) is a binding site for ATP. UDP-N-acetyl-alpha-D-muramoyl-L-alanyl-D-glutamate is bound by residues 151-152 (TT), serine 178, and arginine 186. Residue lysine 218 is modified to N6-carboxylysine. Residues arginine 380, 403 to 406 (DNPR), glycine 453, and glutamate 457 contribute to the meso-2,6-diaminopimelate site. Residues 403–406 (DNPR) carry the Meso-diaminopimelate recognition motif motif.

The protein belongs to the MurCDEF family. MurE subfamily. The cofactor is Mg(2+). In terms of processing, carboxylation is probably crucial for Mg(2+) binding and, consequently, for the gamma-phosphate positioning of ATP.

It localises to the cytoplasm. It carries out the reaction UDP-N-acetyl-alpha-D-muramoyl-L-alanyl-D-glutamate + meso-2,6-diaminopimelate + ATP = UDP-N-acetyl-alpha-D-muramoyl-L-alanyl-gamma-D-glutamyl-meso-2,6-diaminopimelate + ADP + phosphate + H(+). Its pathway is cell wall biogenesis; peptidoglycan biosynthesis. Functionally, catalyzes the addition of meso-diaminopimelic acid to the nucleotide precursor UDP-N-acetylmuramoyl-L-alanyl-D-glutamate (UMAG) in the biosynthesis of bacterial cell-wall peptidoglycan. This chain is UDP-N-acetylmuramoyl-L-alanyl-D-glutamate--2,6-diaminopimelate ligase, found in Chlamydia caviae (strain ATCC VR-813 / DSM 19441 / 03DC25 / GPIC) (Chlamydophila caviae).